The following is a 144-amino-acid chain: Maximins 5/H4 type 3 (144 aa).

Residues 1-18 (MNFKYIVAVSFLIASAYA) form the signal peptide. 2 propeptides span residues 19-43 (RSVQ…REIR) and 74-123 (TAED…KEKR). Leu143 carries the post-translational modification Leucine amide.

It belongs to the bombinin family. As to expression, expressed by the skin glands.

It is found in the secreted. In terms of biological role, maximin-5 shows antibacterial activity against both Gram-positive and Gram-negative bacteria. The only exception is the resistance of E.coli. Also shows antimicrobial activity against fungi C.albicans, A.flavus and P.uticale. It has little hemolytic activity. It does not possess a significant cytotoxicity against tumor cell lines. It does not possess a significant anti-HIV activity. Maximin-H4 shows antibacterial activity against both Gram-positive and Gram-negative bacteria. It also shows antimicrobial activity against the fungus C.albicans. Shows strong hemolytic activity. In Bombina maxima (Giant fire-bellied toad), this protein is Maximins 5/H4 type 3.